A 323-amino-acid chain; its full sequence is Acetyl esterase (323 aa).

The Involved in the stabilization of the negatively charged intermediate by the formation of the oxyanion hole motif lies at 91-93 (HGG). Catalysis depends on residues Ser165, Asp262, and His292.

Belongs to the 'GDXG' lipolytic enzyme family. Homodimer. Interacts with MalT and MelA.

It is found in the cytoplasm. Its function is as follows. Displays esterase activity towards short chain fatty esters (acyl chain length of up to 8 carbons). Able to hydrolyze triacetylglycerol (triacetin) and tributyrylglycerol (tributyrin), but not trioleylglycerol (triolein) or cholesterol oleate. Negatively regulates MalT activity by antagonizing maltotriose binding. Inhibits MelA galactosidase activity. The polypeptide is Acetyl esterase (Salmonella typhi).